We begin with the raw amino-acid sequence, 238 residues long: Ribonuclease PH (238 aa).

Residues R86 and 124–126 each bind phosphate; that span reads GTR.

Belongs to the RNase PH family. In terms of assembly, homohexameric ring arranged as a trimer of dimers.

It catalyses the reaction tRNA(n+1) + phosphate = tRNA(n) + a ribonucleoside 5'-diphosphate. Its function is as follows. Phosphorolytic 3'-5' exoribonuclease that plays an important role in tRNA 3'-end maturation. Removes nucleotide residues following the 3'-CCA terminus of tRNAs; can also add nucleotides to the ends of RNA molecules by using nucleoside diphosphates as substrates, but this may not be physiologically important. Probably plays a role in initiation of 16S rRNA degradation (leading to ribosome degradation) during starvation. This Dichelobacter nodosus (strain VCS1703A) protein is Ribonuclease PH.